The primary structure comprises 360 residues: Chorismate synthase (360 aa).

R48 and R54 together coordinate NADP(+). Residues R125–S127, N246–A247, G286, K301–S305, and R327 contribute to the FMN site.

Belongs to the chorismate synthase family. In terms of assembly, homotetramer. The cofactor is FMNH2.

It carries out the reaction 5-O-(1-carboxyvinyl)-3-phosphoshikimate = chorismate + phosphate. The protein operates within metabolic intermediate biosynthesis; chorismate biosynthesis; chorismate from D-erythrose 4-phosphate and phosphoenolpyruvate: step 7/7. Catalyzes the anti-1,4-elimination of the C-3 phosphate and the C-6 proR hydrogen from 5-enolpyruvylshikimate-3-phosphate (EPSP) to yield chorismate, which is the branch point compound that serves as the starting substrate for the three terminal pathways of aromatic amino acid biosynthesis. This reaction introduces a second double bond into the aromatic ring system. This Actinobacillus succinogenes (strain ATCC 55618 / DSM 22257 / CCUG 43843 / 130Z) protein is Chorismate synthase.